Here is a 1039-residue protein sequence, read N- to C-terminus: Serine/threonine-protein kinase Tao (1039 aa).

Residues 27–280 (FEDLREIGHG…SAKLLTHAYV (254 aa)) enclose the Protein kinase domain. Residues 33–41 (IGHGSFGAV) and lysine 56 contribute to the ATP site. The active-site Proton acceptor is aspartate 150. Disordered regions lie at residues 324 to 457 (SAVG…NSAS), 485 to 508 (GGGGTGTGGSGGGSPASGGPLADR), 629 to 648 (HQQDVERRAKQTSAAEKKLH), and 677 to 707 (WKRELSMDESTPKRQRDLTLQSQKDNLKQHE). Positions 341–350 (SSKSNSITSE) are enriched in polar residues. The span at 359–376 (SAASSQSSSSNSIPAAAQ) shows a compositional bias: low complexity. A compositionally biased stretch (basic residues) spans 377–387 (NHHHIAAHHHQ). 2 stretches are compositionally biased toward low complexity: residues 388-397 (QAASAAVAAA) and 413-429 (PSGQQGQPVPPGAVSRN). Residues 444 to 454 (HSMNNNVTPTN) are compositionally biased toward polar residues. Residues 485-500 (GGGGTGTGGSGGGSPA) show a composition bias toward gly residues. Coiled-coil stretches lie at residues 631 to 765 (QDVE…MLLK) and 835 to 993 (KQFR…DNES). The span at 677–693 (WKRELSMDESTPKRQRD) shows a compositional bias: basic and acidic residues.

It belongs to the protein kinase superfamily. STE Ser/Thr protein kinase family. STE20 subfamily. Interacts with Schip1; the interaction enhances Tao kinase activity. Requires Mg(2+) as cofactor. Autophosphorylated. As to expression, in the posterior midgut, expressed in almost all intestinal cell types including intestinal stem cells and enterocytes (at protein level). Maternally expressed, ubiquitously distributed in the egg and early embryo and enriched in the germ plasm at the posterior pole of the early embryo including the pole cells.

The protein resides in the cytoplasm. Its subcellular location is the cytoskeleton. The protein localises to the spindle. It is found in the membrane. It localises to the perikaryon. The protein resides in the cell cortex. Its subcellular location is the cell projection. The protein localises to the axon. It carries out the reaction L-seryl-[protein] + ATP = O-phospho-L-seryl-[protein] + ADP + H(+). The catalysed reaction is L-threonyl-[protein] + ATP = O-phospho-L-threonyl-[protein] + ADP + H(+). In terms of biological role, serine/threonine-protein kinase which regulates the Hippo/SWH (Sav/Wts/Hpo) signaling pathway, a signaling pathway that plays a pivotal role in organ size control and tumor suppression by restricting proliferation and promoting apoptosis. The core of this pathway is composed of a kinase cascade wherein Hippo (hpo), in complex with its regulatory protein Salvador (sav), phosphorylates and activates Warts (wts) in complex with its regulatory protein Mats, which in turn phosphorylates and inactivates the Yorkie (yki) oncoprotein. In imaginal cells, phosphorylates and activates hpo and leads to repression of yki. In the midgut, negatively regulates the proliferation of intestinal stem cells through the Hippo/SWH pathway. Independent of the hippo/SWH pathway, regulates epithelial morphogenesis in follicle cells by promoting the endocytosis of Fas2 and reducing lateral adhesion between epithelial cells which, in turn, permits shrinking of the lateral membrane and initiates morphogenesis of the squamous epithelium. Required for the development of both the mushroom body and the ellipsoid body in the brain and may act as a negative regulator of the par-1 kinase. Negatively regulates the JNK pathway which increases sensitivity to ethanol exposure. Plays a role in the control of cell shape by negatively regulating the growth of microtubule plus-ends as they contact the actin-rich cell cortex. Required for the induction of apoptosis in pole cells by promoting expression of skl which enhances activity of the apoptosis activator hid. Functionally, induces in vitro expression of large, highly dynamic, microtubule-dependent lamellopodia-like cytoplasmic expansions which constantly probe the environment. Induces in vitro expression of actin-dependent filopodia-like cytoplasmic protrusions which firmly attach to the substrate. Antagonizes the activity of isoform D. The sequence is that of Serine/threonine-protein kinase Tao from Drosophila melanogaster (Fruit fly).